Consider the following 262-residue polypeptide: Apolipoprotein A-I-1 (262 aa).

Residues 1 to 18 (MKFLALALTILLAAGTQA) form the signal peptide. Residues 32 to 63 (VKAALSMYIAQVKLTAQRSIDLLDDTEYKEYK) form a 3 X approximate tandem repeats region. Tandem repeats lie at residues 64 to 85 (MQLTQSLDNLQQYADATSQSLA) and 87 to 107 (YSEAFGTQLTDATAAVRAEVM). Residues 64–262 (MQLTQSLDNL…YETISQAMKA (199 aa)) are 10 X approximate tandem repeats. Residues 108–118 (KDVEELRSQLE) form a 3; half-length repeat. Tandem repeats lie at residues 119–140 (PKRAELKEVLDKHIDEYRKKLE), 141–162 (PLIKEHIELRRTEMEAFRAKME), 163–184 (PIVEELRAKVAINVEETKTKLM), 185–206 (PIVEIVRAKLTERLEELRTLAA), and 207–228 (PYAEEYKEQMIKAVGEVREKVS). One copy of the 9; half-length repeat lies at 229–239 (PLSEDFKGQVG). Residues 240–262 (PAAEQAKQKLLAFYETISQAMKA) form repeat 10.

This sequence belongs to the apolipoprotein A1/A4/E family.

The protein resides in the secreted. In terms of biological role, participates in the reverse transport of cholesterol from tissues to the liver for excretion by promoting cholesterol efflux from tissues and by acting as a cofactor for the lecithin cholesterol acyltransferase (LCAT). The sequence is that of Apolipoprotein A-I-1 from Oncorhynchus mykiss (Rainbow trout).